A 131-amino-acid polypeptide reads, in one-letter code: Small ribosomal subunit protein uS11 (131 aa).

This sequence belongs to the universal ribosomal protein uS11 family. In terms of assembly, part of the 30S ribosomal subunit. Interacts with proteins S7 and S18. Binds to IF-3.

Located on the platform of the 30S subunit, it bridges several disparate RNA helices of the 16S rRNA. Forms part of the Shine-Dalgarno cleft in the 70S ribosome. The sequence is that of Small ribosomal subunit protein uS11 from Dictyoglomus turgidum (strain DSM 6724 / Z-1310).